The sequence spans 97 residues: uncharacterized protein (97 aa).

3 helical membrane-spanning segments follow: residues 5–25, 27–47, and 77–97; these read TLVA…SLSV, MVFV…LICY, and IISI…VFIL.

Its subcellular location is the membrane. This is an uncharacterized protein from Saccharomyces cerevisiae (strain ATCC 204508 / S288c) (Baker's yeast).